Consider the following 364-residue polypeptide: Acetylserotonin O-methyltransferase 1 (364 aa).

S-adenosyl-L-homocysteine is bound by residues Gly-208, Asp-231, Asp-251, and Lys-265. His-269 serves as the catalytic Proton acceptor. Residues Glu-300 and Glu-330 contribute to the active site.

It belongs to the class I-like SAM-binding methyltransferase superfamily. Cation-independent O-methyltransferase family. In terms of assembly, homodimer. Expressed in leaves, stems and flowers.

Its subcellular location is the cytoplasm. The enzyme catalyses N-acetylserotonin + S-adenosyl-L-methionine = melatonin + S-adenosyl-L-homocysteine + H(+). It participates in aromatic compound metabolism; melatonin biosynthesis; melatonin from serotonin: step 1/2. Functionally, methyltransferase which catalyzes the transfer of a methyl group onto N-acetylserotonin, producing melatonin (N-acetyl-5-methoxytryptamine). The protein is Acetylserotonin O-methyltransferase 1 of Oryza sativa subsp. japonica (Rice).